A 158-amino-acid polypeptide reads, in one-letter code: Aspartate carbamoyltransferase regulatory chain (158 aa).

Residues Cys111, Cys116, Cys140, and Cys143 each contribute to the Zn(2+) site.

Belongs to the PyrI family. In terms of assembly, contains catalytic and regulatory chains. The cofactor is Zn(2+).

In terms of biological role, involved in allosteric regulation of aspartate carbamoyltransferase. The sequence is that of Aspartate carbamoyltransferase regulatory chain from Metallosphaera sedula (strain ATCC 51363 / DSM 5348 / JCM 9185 / NBRC 15509 / TH2).